Here is a 429-residue protein sequence, read N- to C-terminus: Adenylosuccinate synthetase (429 aa).

GTP-binding positions include 11–17 (GDEGKGK) and 39–41 (GHT). The Proton acceptor role is filled by Asp-12. The Mg(2+) site is built by Asp-12 and Gly-39. IMP-binding positions include 12–15 (DEGK), 37–40 (NAGH), Thr-130, Arg-144, Asn-226, Thr-241, and Arg-305. His-40 functions as the Proton donor in the catalytic mechanism. 301–307 (VTTGRRR) provides a ligand contact to substrate. GTP contacts are provided by residues Arg-307, 333-335 (KLD), and 415-417 (GVG).

It belongs to the adenylosuccinate synthetase family. In terms of assembly, homodimer. The cofactor is Mg(2+).

It is found in the cytoplasm. The enzyme catalyses IMP + L-aspartate + GTP = N(6)-(1,2-dicarboxyethyl)-AMP + GDP + phosphate + 2 H(+). It participates in purine metabolism; AMP biosynthesis via de novo pathway; AMP from IMP: step 1/2. Functionally, plays an important role in the de novo pathway and in the salvage pathway of purine nucleotide biosynthesis. Catalyzes the first committed step in the biosynthesis of AMP from IMP. The protein is Adenylosuccinate synthetase of Yarrowia lipolytica (strain CLIB 122 / E 150) (Yeast).